We begin with the raw amino-acid sequence, 439 residues long: uncharacterized protein (439 aa).

Positions Pro-273–Ser-439 constitute a VWFA domain.

This is an uncharacterized protein from Methanocaldococcus jannaschii (strain ATCC 43067 / DSM 2661 / JAL-1 / JCM 10045 / NBRC 100440) (Methanococcus jannaschii).